The sequence spans 179 residues: Large ribosomal subunit protein uL6 (179 aa).

The protein belongs to the universal ribosomal protein uL6 family. Part of the 50S ribosomal subunit.

Its function is as follows. This protein binds to the 23S rRNA, and is important in its secondary structure. It is located near the subunit interface in the base of the L7/L12 stalk, and near the tRNA binding site of the peptidyltransferase center. The sequence is that of Large ribosomal subunit protein uL6 from Prochlorococcus marinus (strain MIT 9313).